A 169-amino-acid polypeptide reads, in one-letter code: MANERNQQNLTSLRGSLTGVETFYVVDYQGLTAGQLSQLRKNIREKGGQLIVAKNTLINLALQESGRDFSDALKGPSALVLAQEDPAGVAKALSDAAKGNDKGIPAIKGGFVEGNRVDVRVVERLASLGSKQSLQGELVGVLSAHLSNFVGILEAYRDKLGGGAAEAQG.

Belongs to the universal ribosomal protein uL10 family. As to quaternary structure, part of the ribosomal stalk of the 50S ribosomal subunit. The N-terminus interacts with L11 and the large rRNA to form the base of the stalk. The C-terminus forms an elongated spine to which L12 dimers bind in a sequential fashion forming a multimeric L10(L12)X complex.

Its function is as follows. Forms part of the ribosomal stalk, playing a central role in the interaction of the ribosome with GTP-bound translation factors. The sequence is that of Large ribosomal subunit protein uL10 from Deinococcus geothermalis (strain DSM 11300 / CIP 105573 / AG-3a).